Here is a 355-residue protein sequence, read N- to C-terminus: Uroporphyrinogen decarboxylase (355 aa).

Substrate is bound by residues 27 to 31, aspartate 77, tyrosine 154, threonine 209, and histidine 328; that span reads RQAGR.

It belongs to the uroporphyrinogen decarboxylase family. In terms of assembly, homodimer.

The protein resides in the cytoplasm. It catalyses the reaction uroporphyrinogen III + 4 H(+) = coproporphyrinogen III + 4 CO2. It participates in porphyrin-containing compound metabolism; protoporphyrin-IX biosynthesis; coproporphyrinogen-III from 5-aminolevulinate: step 4/4. Catalyzes the decarboxylation of four acetate groups of uroporphyrinogen-III to yield coproporphyrinogen-III. This Colwellia psychrerythraea (strain 34H / ATCC BAA-681) (Vibrio psychroerythus) protein is Uroporphyrinogen decarboxylase.